Here is a 617-residue protein sequence, read N- to C-terminus: Zinc finger protein 221 (617 aa).

The 71-residue stretch at 30–100 folds into the KRAB domain; that stretch reads VTFKDVAVVF…KTTSQREGNS (71 aa). 3 consecutive C2H2-type zinc fingers follow at residues 170-192, 198-220, and 226-248; these read YRCN…QQSH, HTCG…QRVH, and YKCD…QRVH. The segment at 254–276 adopts a C2H2-type 4; degenerate zinc-finger fold; it reads FKCGQCGKGFHSRSALNVHCKLH. C2H2-type zinc fingers lie at residues 282 to 304, 310 to 332, 338 to 360, 366 to 388, 394 to 416, 422 to 444, 450 to 472, 478 to 500, 506 to 528, 534 to 556, and 562 to 584; these read YNCE…QRIH, FKCD…SMVH, FRCD…SMVH, YKCE…QMVH, YNCK…QQVH, FKCE…QRSH, YNCE…QRVH, YNCK…QRLH, FKCE…QTCH, and YKCE…QRVH.

The protein belongs to the krueppel C2H2-type zinc-finger protein family.

The protein resides in the nucleus. Functionally, may be involved in transcriptional regulation. The chain is Zinc finger protein 221 (ZNF221) from Homo sapiens (Human).